Here is a 217-residue protein sequence, read N- to C-terminus: ATP-dependent Clp protease proteolytic subunit 2 (217 aa).

S121 functions as the Nucleophile in the catalytic mechanism. H146 is an active-site residue.

Belongs to the peptidase S14 family. As to quaternary structure, fourteen ClpP subunits assemble into 2 heptameric rings which stack back to back to give a disk-like structure with a central cavity, resembling the structure of eukaryotic proteasomes.

It localises to the cytoplasm. It catalyses the reaction Hydrolysis of proteins to small peptides in the presence of ATP and magnesium. alpha-casein is the usual test substrate. In the absence of ATP, only oligopeptides shorter than five residues are hydrolyzed (such as succinyl-Leu-Tyr-|-NHMec, and Leu-Tyr-Leu-|-Tyr-Trp, in which cleavage of the -Tyr-|-Leu- and -Tyr-|-Trp bonds also occurs).. Its function is as follows. Cleaves peptides in various proteins in a process that requires ATP hydrolysis. Has a chymotrypsin-like activity. Plays a major role in the degradation of misfolded proteins. This is ATP-dependent Clp protease proteolytic subunit 2 from Paraburkholderia xenovorans (strain LB400).